The following is a 339-amino-acid chain: Fe-S cluster assembly protein DRE2 (339 aa).

The tract at residues 1–157 (MTRILLLLHP…KKLSSTHAAV (157 aa)) is N-terminal SAM-like domain. Positions 158-206 (GLTDTSASNTDEENDDVNSKRKLQETKLAYFSESDDEDEEDQIIDENNL) are linker. [2Fe-2S] cluster is bound by residues Cys221, Cys233, Cys236, and Cys238. The fe-S binding site A stretch occupies residues 221–238 (CELPNGKKRRKACKDCTC). Residues Cys302, Cys305, Cys313, and Cys316 each contribute to the [4Fe-4S] cluster site. 2 consecutive short sequence motifs (cx2C motif) follow at residues 302–305 (CSSC) and 313–316 (CDGC). The segment at 302–316 (CSSCSLGDAFRCDGC) is fe-S binding site B.

It belongs to the anamorsin family. In terms of assembly, monomer. Interacts with TAH18. Interacts with MIA40. It depends on [2Fe-2S] cluster as a cofactor. Requires [4Fe-4S] cluster as cofactor.

The protein resides in the cytoplasm. The protein localises to the mitochondrion intermembrane space. Functionally, component of the cytosolic iron-sulfur (Fe-S) protein assembly (CIA) machinery required for the maturation of extramitochondrial Fe-S proteins. Part of an electron transfer chain functioning in an early step of cytosolic Fe-S biogenesis, facilitating the de novo assembly of a [4Fe-4S] cluster on the scaffold complex CFD1-NBP35. Electrons are transferred to DRE2 from NADPH via the FAD- and FMN-containing protein TAH18. TAH18-DRE2 are also required for the assembly of the diferric tyrosyl radical cofactor of ribonucleotide reductase (RNR), probably by providing electrons for reduction during radical cofactor maturation in the catalytic small subunit RNR2. This is Fe-S cluster assembly protein DRE2 from Debaryomyces hansenii (strain ATCC 36239 / CBS 767 / BCRC 21394 / JCM 1990 / NBRC 0083 / IGC 2968) (Yeast).